The primary structure comprises 64 residues: Large ribosomal subunit protein bL28 (64 aa).

The protein belongs to the bacterial ribosomal protein bL28 family.

This is Large ribosomal subunit protein bL28 from Campylobacter lari (strain RM2100 / D67 / ATCC BAA-1060).